Reading from the N-terminus, the 1038-residue chain is Zinc finger protein 628 (1038 aa).

The interval 1–31 (MAGSHVDMAPASTTEGTGEKPGPTAPAPTPA) is disordered. Residues 13-22 (TTEGTGEKPG) show a composition bias toward low complexity. 6 C2H2-type zinc fingers span residues 34–56 (YECG…QRTH), 62–84 (YKCP…QRGH), 90–112 (YQCP…RSVH), 118–140 (FTCG…LRQH), 146–168 (YPCP…RHVH), and 174–196 (YTCG…QRVH). A Phosphothreonine modification is found at threonine 197. The C2H2-type 7 zinc finger occupies 202–224 (FRCPLCPKTFTHSSNLLLHHRTH). Disordered regions lie at residues 220–242 (HHRT…ETSR) and 254–273 (LQPR…PPVV). Pro residues-rich tracts occupy residues 227–237 (APGPAPAPAPP) and 257–273 (RSPP…PPVV). 7 C2H2-type zinc fingers span residues 346 to 368 (FACL…QHSH), 376 to 398 (FRCG…QQCH), 446 to 468 (YKCA…LRDH), 474 to 496 (YQCG…QRVH), 502 to 524 (FTCG…LRLH), 530 to 552 (YACT…RHVH), and 558 to 580 (HSCS…QRVH). Residue threonine 581 is modified to Phosphothreonine. C2H2-type zinc fingers lie at residues 586 to 608 (FRCP…QRTH) and 614 to 636 (FACP…LRTH). Disordered stretches follow at residues 637–661 (TPAT…LAAA) and 717–763 (PSSV…AGQG). Over residues 723–733 (PTPPPPPPPPK) the composition is skewed to pro residues. The span at 734–756 (VILLPPASAGGPGSGAARPGPRS) shows a compositional bias: low complexity. A run of 4 repeats spans residues 811–821 (VQLQPAQEVAT), 822–832 (VQLQPAQEVTT), 833–843 (VQLQPAQEVTT), and 844–854 (VQLQPLTGQVS). Residues 811 to 854 (VQLQPAQEVATVQLQPAQEVTTVQLQPAQEVTTVQLQPLTGQVS) are 4 X 11 AA tandem repeats of VQLQP-[AL]-[QT]-[EG]-[VQ]-[ATV]-[ST]. The interaction with TAF4B stretch occupies residues 922-1038 (DGEQTRLCVQ…LPAVQLVHTF (117 aa)).

As to quaternary structure, interacts with TAF4B. Expressed widely in testis, in both germline and somatic cells. Seems to have particularly strong expression in meiotic spermatocytes, postmeiotic round spermatids and Sertoli cells. Not detected in elongating spermatids or mature sperm (at protein level). Expressed in testis, ovary, spleen, lung, brain, liver and kidney. Expressed in D3 embryonic stem cells and F9 embryonal carcinoma cells.

Its subcellular location is the nucleus. Functionally, transcriptional activator. Binds DNA on GT-box consensus sequence 5'-TTGGTT-3'. Plays a role in spermiogenesis. This is Zinc finger protein 628 from Mus musculus (Mouse).